Reading from the N-terminus, the 571-residue chain is Phosphatidylinositol-3,5-bisphosphate 3-phosphatase MTMR2 (571 aa).

Residues 1 to 67 (MEEPPLLPGE…GVINRVEKIG (67 aa)) enclose the GRAM domain. Positions 133-508 (GWKVYDPIWE…RHLELWVGYY (376 aa)) constitute a Myotubularin phosphatase domain. Residues asparagine 258, asparagine 283, and isoleucine 284 each contribute to the a 1,2-diacyl-sn-glycero-3-phospho-(1D-myo-inositol-3,5-bisphosphate) site. Positions 258, 283, and 284 each coordinate a 1,2-diacyl-sn-glycero-3-phospho-(1D-myo-inositol-3-phosphate). Cysteine 345 acts as the Phosphocysteine intermediate in catalysis. Serine 346, aspartate 347, glycine 348, tryptophan 349, aspartate 350, arginine 351, arginine 387, and arginine 391 together coordinate a 1,2-diacyl-sn-glycero-3-phospho-(1D-myo-inositol-3,5-bisphosphate). Residues serine 346, aspartate 347, glycine 348, tryptophan 349, aspartate 350, and arginine 351 each coordinate a 1,2-diacyl-sn-glycero-3-phospho-(1D-myo-inositol-3-phosphate). Arginine 391 contacts a 1,2-diacyl-sn-glycero-3-phospho-(1D-myo-inositol-3-phosphate). A coiled-coil region spans residues 521-553 (VHNRYKELLAKRAELQKKVEELQREITNRSTSS). Residues 544–571 (REITNRSTSSSERAGSPAQCVTPVQTVV) are disordered.

It belongs to the protein-tyrosine phosphatase family. Non-receptor class myotubularin subfamily. Homooligomer and heterooligomer.

Its subcellular location is the cytoplasm. The protein localises to the early endosome membrane. The catalysed reaction is a 1,2-diacyl-sn-glycero-3-phospho-(1D-myo-inositol-3,5-bisphosphate) + H2O = a 1,2-diacyl-sn-glycero-3-phospho-(1D-myo-inositol-5-phosphate) + phosphate. It catalyses the reaction a 1,2-diacyl-sn-glycero-3-phospho-(1D-myo-inositol-3-phosphate) + H2O = a 1,2-diacyl-sn-glycero-3-phospho-(1D-myo-inositol) + phosphate. The enzyme catalyses 1,2-dioctanoyl-sn-glycero-3-phospho-(1-D-myo-inositol-3-phosphate) + H2O = 1,2-dioctanoyl-sn-glycero-3-phospho-(1D-myo-inositol) + phosphate. It carries out the reaction 1,2-dioctanoyl-sn-glycero-3-phospho-(1D-myo-inositol-3,5-bisphosphate) + H2O = 1,2-dioctanoyl-sn-glycero-3-phospho-(1D-myo-inositol-5-phosphate) + phosphate. Lipid phosphatase that specifically dephosphorylates the D-3 position of phosphatidylinositol 3-phosphate and phosphatidylinositol 3,5-bisphosphate, generating phosphatidylinositol and phosphatidylinositol 5-phosphate. Regulates the level of these phosphoinositides critical for various biological processes including autophagy initiation and autophagosome maturation. In Gallus gallus (Chicken), this protein is Phosphatidylinositol-3,5-bisphosphate 3-phosphatase MTMR2.